The following is an 811-amino-acid chain: Phenylalanine--tRNA ligase beta subunit (811 aa).

In terms of domain architecture, tRNA-binding spans 39 to 151; it reads RTWAAGVVVG…AGLQAGQPVG (113 aa). One can recognise a B5 domain in the interval 409–495; the sequence is EPEHSITLRL…RLYGYDNFGE (87 aa). Asp473, Asp479, Glu482, and Glu483 together coordinate Mg(2+). An FDX-ACB domain is found at 717–810; the sequence is SSFPASDRDL…LVERFRVTLR (94 aa).

Belongs to the phenylalanyl-tRNA synthetase beta subunit family. Type 1 subfamily. Tetramer of two alpha and two beta subunits. Mg(2+) serves as cofactor.

It is found in the cytoplasm. The enzyme catalyses tRNA(Phe) + L-phenylalanine + ATP = L-phenylalanyl-tRNA(Phe) + AMP + diphosphate + H(+). In Synechococcus sp. (strain ATCC 27144 / PCC 6301 / SAUG 1402/1) (Anacystis nidulans), this protein is Phenylalanine--tRNA ligase beta subunit.